A 294-amino-acid polypeptide reads, in one-letter code: Glycine N-acyltransferase-like protein 2 (294 aa).

K19 carries the post-translational modification N6-acetyllysine.

It belongs to the glycine N-acyltransferase family. Acetylation at Lys-19 drastically decreases the production of N-oleoyl and N-arachidonoyl glycines. As to expression, expressed at highest levels in salivary gland and trachea. Also detected in thyroid gland, spinal cord, prostate, lung and fetal brain.

The protein localises to the endoplasmic reticulum. The catalysed reaction is an acyl-CoA + glycine = an N-acylglycine + CoA + H(+). It catalyses the reaction (9Z)-hexadecenoyl-CoA + glycine = N-(9Z-hexadecenoyl)-glycine + CoA + H(+). The enzyme catalyses octadecanoyl-CoA + glycine = N-octadecanoylglycine + CoA + H(+). It carries out the reaction (5Z,8Z,11Z,14Z)-eicosatetraenoyl-CoA + glycine = N-(5Z,8Z,11Z,14Z)-eicosatetraenoyl-glycine + CoA + H(+). The catalysed reaction is (9Z)-octadecenoyl-CoA + glycine = N-(9Z-octadecenoyl)glycine + CoA + H(+). It catalyses the reaction octanoyl-CoA + glycine = N-octanoylglycine + CoA + H(+). The enzyme catalyses decanoyl-CoA + glycine = N-decanoylglycine + CoA + H(+). It carries out the reaction tetradecanoyl-CoA + glycine = N-tetradecanoylglycine + CoA + H(+). The catalysed reaction is dodecanoyl-CoA + glycine = N-dodecanoylglycine + CoA + H(+). It catalyses the reaction (9Z,12Z)-octadecadienoyl-CoA + glycine = N-(9Z,12Z-octadecadienoyl)-glycine + CoA + H(+). The enzyme catalyses a fatty acyl-CoA + glycine = an N-(fatty acyl)-glycine + CoA + H(+). In terms of biological role, mitochondrial acyltransferase which transfers the acyl group to the N-terminus of glycine. Conjugates numerous substrates, such as arachidonoyl-CoA and saturated medium and long-chain acyl-CoAs ranging from chain-length C8:0-CoA to C18:0-CoA, to form a variety of N-acylglycines. Shows a preference for monounsaturated fatty acid oleoyl-CoA (C18:1-CoA) as an acyl donor. Does not exhibit any activity toward C22:6-CoA and chenodeoxycholoyl-CoA, nor toward serine or alanine. This chain is Glycine N-acyltransferase-like protein 2, found in Homo sapiens (Human).